The following is a 152-amino-acid chain: Superoxide dismutase [Cu-Zn] (152 aa).

Residues His45, His47, and His62 each contribute to the Cu cation site. An intrachain disulfide couples Cys56 to Cys145. Zn(2+) contacts are provided by His62, His70, His79, and Asp82. Residue His119 coordinates Cu cation.

It belongs to the Cu-Zn superoxide dismutase family. In terms of assembly, homodimer. It depends on Cu cation as a cofactor. Zn(2+) is required as a cofactor.

It is found in the cytoplasm. The enzyme catalyses 2 superoxide + 2 H(+) = H2O2 + O2. In terms of biological role, destroys radicals which are normally produced within the cells and which are toxic to biological systems. This is Superoxide dismutase [Cu-Zn] (SODCC) from Panax ginseng (Korean ginseng).